Consider the following 92-residue polypeptide: Alpha-conotoxin FrXXA (92 aa).

The signal sequence occupies residues 1–24 (MPKLEMMLLVLLILPLSYFDSAGG). The propeptide occupies 25 to 45 (QAVKVDGHGDGMDRYLQRDDR). 4 disulfide bridges follow: cysteine 63-cysteine 72, cysteine 68-cysteine 80, cysteine 73-cysteine 90, and cysteine 78-cysteine 92.

Belongs to the conotoxin D superfamily. As to quaternary structure, homodimer; disulfide-linked. Post-translationally, the homodimer contains 10 disulfide bonds. In terms of tissue distribution, expressed by the venom duct.

The protein resides in the secreted. In terms of biological role, alpha-conotoxins act on postsynaptic membranes, they bind to the nicotinic acetylcholine receptors (nAChR) and thus inhibit them. Through its two C-terminal domains, this homodimeric protein would bind to two nAChR allosteric sites, located outside the nAChR C-loop of the principal binding face and at the adjacent binding interface in a clockwise direction. This toxin blocks both neuronal and muscular subtypes: human alpha-7/CHRNA7, human alpha-3-beta-2 (CHRNA3-CHRNB2), human alpha-4-beta-2 (CHRNA4-CHRNB2), mouse adult muscular subtype alpha-1-beta-1-delta-epsilon (CHRNA1-CHRNB1-CHRND-CHRNE), and mouse fetal muscular subtype alpha-1-beta-1-gamma-delta (CHRNA1-CHRNB1-CHRNG-CHRND). Shows different dissociation rates towards the different subtypes, with a very slow rate towards alpha-7 subtype (almost irreversible), followed by the adult muscular subtype, the fetal muscular subtype, alpha-3-beta-2 and alpha-4-beta-2 (almost entirely reversible within a few minutes of washing). The chain is Alpha-conotoxin FrXXA from Conus fergusoni (Ferguson's cone).